The chain runs to 291 residues: ATP synthase gamma chain (291 aa).

The protein belongs to the ATPase gamma chain family. F-type ATPases have 2 components, CF(1) - the catalytic core - and CF(0) - the membrane proton channel. CF(1) has five subunits: alpha(3), beta(3), gamma(1), delta(1), epsilon(1). CF(0) has three main subunits: a, b and c.

The protein localises to the cell inner membrane. Functionally, produces ATP from ADP in the presence of a proton gradient across the membrane. The gamma chain is believed to be important in regulating ATPase activity and the flow of protons through the CF(0) complex. This Aquifex aeolicus (strain VF5) protein is ATP synthase gamma chain.